The sequence spans 302 residues: Probable WRKY transcription factor 40 (302 aa).

Positions 140 to 206 (DTTLVVKDGY…YEGEHNHPMP (67 aa)) form a DNA-binding region, WRKY.

It belongs to the WRKY group III family.

The protein resides in the nucleus. In terms of biological role, transcription factor. Interacts specifically with the W box (5'-(T)TGAC[CT]-3'), a frequently occurring elicitor-responsive cis-acting element. The sequence is that of Probable WRKY transcription factor 40 from Arabidopsis thaliana (Mouse-ear cress).